A 198-amino-acid chain; its full sequence is Inosine triphosphate pyrophosphatase (198 aa).

An N-acetylalanine modification is found at A2. 14–19 contacts ITP; it reads TGNAKK. Mg(2+) is bound at residue E44. ITP is bound by residues K56, 72–73, and K89; that span reads DT. The residue at position 146 (S146) is a Phosphoserine. Residues 149–152, K172, and 177–178 contribute to the ITP site; these read FGWD and HR.

Belongs to the HAM1 NTPase family. In terms of assembly, homodimer. Mg(2+) is required as a cofactor. It depends on Mn(2+) as a cofactor.

The protein resides in the cytoplasm. It catalyses the reaction ITP + H2O = IMP + diphosphate + H(+). The catalysed reaction is dITP + H2O = dIMP + diphosphate + H(+). The enzyme catalyses XTP + H2O = XMP + diphosphate + H(+). It carries out the reaction N(6)-hydroxy-dATP + H2O = N(6)-hydroxy-dAMP + diphosphate + H(+). Pyrophosphatase that hydrolyzes the non-canonical purine nucleotides inosine triphosphate (ITP), deoxyinosine triphosphate (dITP) as well as 2'-deoxy-N-6-hydroxylaminopurine triphosphate (dHAPTP) and xanthosine 5'-triphosphate (XTP) to their respective monophosphate derivatives. The enzyme does not distinguish between the deoxy- and ribose forms. Probably excludes non-canonical purines from RNA and DNA precursor pools, thus preventing their incorporation into RNA and DNA and avoiding chromosomal lesions. The protein is Inosine triphosphate pyrophosphatase (Itpa) of Rattus norvegicus (Rat).